A 322-amino-acid polypeptide reads, in one-letter code: Acetyl-coenzyme A carboxylase carboxyl transferase subunit alpha (322 aa).

Positions 39–293 (RLQKKSQALT…RRALTDTLAE (255 aa)) constitute a CoA carboxyltransferase C-terminal domain.

The protein belongs to the AccA family. As to quaternary structure, acetyl-CoA carboxylase is a heterohexamer composed of biotin carboxyl carrier protein (AccB), biotin carboxylase (AccC) and two subunits each of ACCase subunit alpha (AccA) and ACCase subunit beta (AccD).

It localises to the cytoplasm. The enzyme catalyses N(6)-carboxybiotinyl-L-lysyl-[protein] + acetyl-CoA = N(6)-biotinyl-L-lysyl-[protein] + malonyl-CoA. The protein operates within lipid metabolism; malonyl-CoA biosynthesis; malonyl-CoA from acetyl-CoA: step 1/1. Functionally, component of the acetyl coenzyme A carboxylase (ACC) complex. First, biotin carboxylase catalyzes the carboxylation of biotin on its carrier protein (BCCP) and then the CO(2) group is transferred by the carboxyltransferase to acetyl-CoA to form malonyl-CoA. The protein is Acetyl-coenzyme A carboxylase carboxyl transferase subunit alpha of Thiobacillus denitrificans (strain ATCC 25259 / T1).